We begin with the raw amino-acid sequence, 224 residues long: UPF0758 protein NE1464 (224 aa).

One can recognise an MPN domain in the interval 102–224 (IMDSPQSVRN…VVSFAERGLI (123 aa)). The Zn(2+) site is built by His-173, His-175, and Asp-186. Positions 173-186 (HNHPSGIAEPSTAD) match the JAMM motif motif.

The protein belongs to the UPF0758 family.

The sequence is that of UPF0758 protein NE1464 from Nitrosomonas europaea (strain ATCC 19718 / CIP 103999 / KCTC 2705 / NBRC 14298).